A 305-amino-acid chain; its full sequence is MANDKDIAAVGSILVNTKQDLTTRFRALFTLRNLGGAEAVKWISEAFVDESALLKHELAYCLGQMQDESAIPTLEAVLKDTNQEPMVRHEAGEALGAIGNPKVLELLKKYAEDPVIEVAETCQLAVKRLEWLMNGGEQTKDGTDENPYCSVDPAPPAQRKSVPELRTQLLDETLPLFDRYRAMFALRNLGTEEAVLALGDGLQCSSALFRHEIGYVLGQIQHEASIPQLQAALEKMDENAMVRHECAEALGSIGKEPCVQILERYRKDQERVVKESCEVALDMLEYENSSQFQYADGLLRLQSAH.

HEAT-like PBS-type repeat units lie at residues 54-80 and 87-113; these read LKHE…VLKD and VRHE…YAED. Fe cation contacts are provided by histidine 56, histidine 89, and glutamate 90. The segment at 137–160 is disordered; the sequence is EQTKDGTDENPYCSVDPAPPAQRK. HEAT-like PBS-type repeat units lie at residues 178–204, 209–235, and 242–268; these read DRYR…GLQC, FRHE…ALEK, and VRHE…YRKD. 3 residues coordinate Fe cation: histidine 211, histidine 244, and glutamate 245.

This sequence belongs to the deoxyhypusine hydroxylase family. The cofactor is Fe(2+).

The enzyme catalyses [eIF5A protein]-deoxyhypusine + AH2 + O2 = [eIF5A protein]-hypusine + A + H2O. It functions in the pathway protein modification; eIF5A hypusination. Catalyzes the hydroxylation of the N(6)-(4-aminobutyl)-L-lysine intermediate produced by deoxyhypusine synthase/DHPS on a critical lysine of the eukaryotic translation initiation factor 5A/eIF-5A. This is the second step of the post-translational modification of that lysine into an unusual amino acid residue named hypusine. Hypusination is unique to mature eIF-5A factor and is essential for its function. The protein is Deoxyhypusine hydroxylase (dohh) of Danio rerio (Zebrafish).